The primary structure comprises 143 residues: Putative pre-16S rRNA nuclease (143 aa).

Belongs to the YqgF nuclease family.

It is found in the cytoplasm. Could be a nuclease involved in processing of the 5'-end of pre-16S rRNA. The protein is Putative pre-16S rRNA nuclease of Salinibacter ruber (strain DSM 13855 / M31).